We begin with the raw amino-acid sequence, 283 residues long: Shikimate dehydrogenase (NADP(+)) (283 aa).

Shikimate-binding positions include 19–21 (SRS) and threonine 66. Lysine 70 serves as the catalytic Proton acceptor. Glutamate 82 is an NADP(+) binding site. Shikimate is bound by residues asparagine 91 and aspartate 107. Residues 133–137 (GAGGA) and isoleucine 226 each bind NADP(+). Residue tyrosine 228 participates in shikimate binding. NADP(+) is bound at residue glycine 249.

The protein belongs to the shikimate dehydrogenase family. Homodimer.

The catalysed reaction is shikimate + NADP(+) = 3-dehydroshikimate + NADPH + H(+). It functions in the pathway metabolic intermediate biosynthesis; chorismate biosynthesis; chorismate from D-erythrose 4-phosphate and phosphoenolpyruvate: step 4/7. Involved in the biosynthesis of the chorismate, which leads to the biosynthesis of aromatic amino acids. Catalyzes the reversible NADPH linked reduction of 3-dehydroshikimate (DHSA) to yield shikimate (SA). This is Shikimate dehydrogenase (NADP(+)) from Rhodospirillum rubrum (strain ATCC 11170 / ATH 1.1.1 / DSM 467 / LMG 4362 / NCIMB 8255 / S1).